The following is a 356-amino-acid chain: Magnesium-protoporphyrin IX monomethyl ester [oxidative] cyclase (356 aa).

This sequence belongs to the AcsF family. Requires Fe cation as cofactor.

The catalysed reaction is Mg-protoporphyrin IX 13-monomethyl ester + 3 NADPH + 3 O2 + 2 H(+) = 3,8-divinyl protochlorophyllide a + 3 NADP(+) + 5 H2O. The protein operates within porphyrin-containing compound metabolism; chlorophyll biosynthesis (light-independent). Its function is as follows. Catalyzes the formation of the isocyclic ring in chlorophyll biosynthesis. Mediates the cyclase reaction, which results in the formation of divinylprotochlorophyllide (Pchlide) characteristic of all chlorophylls from magnesium-protoporphyrin IX 13-monomethyl ester (MgPMME). The sequence is that of Magnesium-protoporphyrin IX monomethyl ester [oxidative] cyclase from Synechococcus sp. (strain CC9605).